Consider the following 189-residue polypeptide: Elongation factor P (189 aa).

Lysine 34 carries the post-translational modification N6-(3,6-diaminohexanoyl)-5-hydroxylysine.

Belongs to the elongation factor P family. May be beta-lysylated on the epsilon-amino group of Lys-34 by the combined action of EpmA and EpmB, and then hydroxylated on the C5 position of the same residue by EpmC (if this protein is present). Lysylation is critical for the stimulatory effect of EF-P on peptide-bond formation. The lysylation moiety may extend toward the peptidyltransferase center and stabilize the terminal 3-CCA end of the tRNA. Hydroxylation of the C5 position on Lys-34 may allow additional potential stabilizing hydrogen-bond interactions with the P-tRNA.

The protein localises to the cytoplasm. It participates in protein biosynthesis; polypeptide chain elongation. Involved in peptide bond synthesis. Alleviates ribosome stalling that occurs when 3 or more consecutive Pro residues or the sequence PPG is present in a protein, possibly by augmenting the peptidyl transferase activity of the ribosome. Modification of Lys-34 is required for alleviation. The protein is Elongation factor P of Buchnera aphidicola subsp. Baizongia pistaciae (strain Bp).